Consider the following 447-residue polypeptide: Argininosuccinate synthase (447 aa).

ATP is bound by residues 17 to 25 and alanine 43; that span reads AFSGGLDTS. Tyrosine 99 serves as a coordination point for L-citrulline. Glycine 129 and threonine 131 together coordinate ATP. The L-aspartate site is built by threonine 131, asparagine 135, and aspartate 136. Residue asparagine 135 coordinates L-citrulline. Aspartate 136 contacts ATP. Positions 139 and 192 each coordinate L-citrulline. Residue aspartate 194 coordinates ATP. L-citrulline is bound by residues threonine 201, glutamate 203, and glutamate 280.

The protein belongs to the argininosuccinate synthase family. Type 2 subfamily. In terms of assembly, homotetramer.

The protein resides in the cytoplasm. It catalyses the reaction L-citrulline + L-aspartate + ATP = 2-(N(omega)-L-arginino)succinate + AMP + diphosphate + H(+). It functions in the pathway amino-acid biosynthesis; L-arginine biosynthesis; L-arginine from L-ornithine and carbamoyl phosphate: step 2/3. This is Argininosuccinate synthase from Escherichia coli O127:H6 (strain E2348/69 / EPEC).